Here is a 214-residue protein sequence, read N- to C-terminus: Adenylate kinase (214 aa).

11–16 contacts ATP; sequence GTGKGT. The segment at 31–61 is NMP; sequence SSGDLFRFYAKEEKTALAEEIKSYINNGLYV. AMP-binding positions include Ser-32, Arg-37, 59–61, 87–90, and Gln-94; these read LYV and GYPR. Positions 124-163 are LID; it reads LRRSCPQCKRIYNINSVDFKPKVANLCDLCKVELIHRKDD. Arg-125 serves as a coordination point for ATP. Zn(2+) contacts are provided by Cys-128 and Cys-131. 134-135 contributes to the ATP binding site; the sequence is IY. The Zn(2+) site is built by Cys-150 and Cys-153. Positions 160 and 171 each coordinate AMP. Position 199 (Lys-199) interacts with ATP.

It belongs to the adenylate kinase family. Monomer.

It localises to the cytoplasm. The catalysed reaction is AMP + ATP = 2 ADP. Its pathway is purine metabolism; AMP biosynthesis via salvage pathway; AMP from ADP: step 1/1. Catalyzes the reversible transfer of the terminal phosphate group between ATP and AMP. Plays an important role in cellular energy homeostasis and in adenine nucleotide metabolism. The polypeptide is Adenylate kinase (Mycoplasmoides gallisepticum (strain R(low / passage 15 / clone 2)) (Mycoplasma gallisepticum)).